A 335-amino-acid polypeptide reads, in one-letter code: Foldase protein PrsA (335 aa).

The signal sequence occupies residues 1-20 (MKKKIFAGAVTLLSVAVLAA). Cys-21 carries the N-palmitoyl cysteine lipid modification. Residue Cys-21 is the site of S-diacylglycerol cysteine attachment. Residues 142–239 (TPEVTAQIIK…ASYYIVKLVK (98 aa)) enclose the PpiC domain. Residues 300 to 335 (TGSSTSSSSAASSSKTSESSSAAESSSKEASSSAAE) form a disordered region. Positions 302–335 (SSTSSSSAASSSKTSESSSAAESSSKEASSSAAE) are enriched in low complexity.

This sequence belongs to the PrsA family.

The protein resides in the cell membrane. The catalysed reaction is [protein]-peptidylproline (omega=180) = [protein]-peptidylproline (omega=0). Functionally, plays a major role in protein secretion by helping the post-translocational extracellular folding of several secreted proteins. This chain is Foldase protein PrsA, found in Streptococcus sanguinis (strain SK36).